Reading from the N-terminus, the 203-residue chain is Ribosome maturation factor RimP (203 aa).

The tract at residues 183-203 (FDDIETEGSAEGTTGSEEENK) is disordered.

This sequence belongs to the RimP family.

It is found in the cytoplasm. In terms of biological role, required for maturation of 30S ribosomal subunits. The polypeptide is Ribosome maturation factor RimP (Ruegeria sp. (strain TM1040) (Silicibacter sp.)).